The following is a 115-amino-acid chain: uncharacterized protein (115 aa).

A disordered region spans residues 1-115; that stretch reads MGETWFLTPN…ARSPERTPSP (115 aa). Over residues 7–17 the composition is skewed to polar residues; it reads LTPNGQSSPGS. Low complexity-rich tracts occupy residues 60-70 and 91-107; these read ASCAPRATPRR and SASA…WPAR.

This is an uncharacterized protein from Human adenovirus C serotype 2 (HAdV-2).